We begin with the raw amino-acid sequence, 695 residues long: Protein VP3 (695 aa).

The interval 187–255 (FMRLLRMRFA…RVSELKGSGS (69 aa)) is N7-methyltransferase activity. Residues 256–432 (YSEKKISEFD…KRPKIKITKS (177 aa)) form a 2'-O-methyltransferase activity region. Residues 433–559 (LAYGAINTIF…NHIYIIPNAR (127 aa)) form an N7-methyltransferase activity region. Residues 560-695 (DDDNFDTFAS…MEIWDVQTWG (136 aa)) form a GTase/RTPase activity region.

It belongs to the rotavirus VP3 family. In terms of assembly, interacts with VP1. Interacts with VP2.

Its subcellular location is the virion. The enzyme catalyses a 5'-end diphospho-ribonucleoside in mRNA + GTP + H(+) = a 5'-end (5'-triphosphoguanosine)-ribonucleoside in mRNA + diphosphate. It carries out the reaction a 5'-end (5'-triphosphoguanosine)-ribonucleoside in mRNA + S-adenosyl-L-methionine = a 5'-end (N(7)-methyl 5'-triphosphoguanosine)-ribonucleoside in mRNA + S-adenosyl-L-homocysteine. Its function is as follows. Multifunctional enzyme involved in mRNA capping. Catalyzes the formation of the 5' cap structure on the viral plus-strand transcripts. Specifically binds to GTP and displays guanylyltransferase and methyltransferase activities. Has affinity for ssRNA but not for dsRNA. Capping activity is non-specific and caps RNAs that initiate with either a G or an A residue. Together with VP1 polymerase, forms a VP1-VP3 complex positioned near the channels situated at each of the five-fold vertices of the core. Following infection, the outermost layer of the virus is lost, leaving a double-layered particle (DLP) made up of the core and VP6 shell. VP1 then catalyzes the transcription of fully conservative plus-strand genomic RNAs that are capped by VP3 and extruded through the DLP's channels into the cytoplasm where they function as mRNAs for translation of viral proteins. DLPs probably have an RNA triphosphatase activity as well, whereas open cores do not. The chain is Protein VP3 from Rotavirus C (isolate RVC/Cow/Japan/Shintoku/1991/G2P[3]) (RV-C).